The following is a 462-amino-acid chain: Cysteine--tRNA ligase (462 aa).

Cys28 contributes to the Zn(2+) binding site. Residues 30-40 (MTVYDYCHLGH) carry the 'HIGH' region motif. Zn(2+)-binding residues include Cys209, His234, and Glu238. The short motif at 266–270 (KMAKS) is the 'KMSKS' region element. Lys269 contributes to the ATP binding site.

It belongs to the class-I aminoacyl-tRNA synthetase family. As to quaternary structure, monomer. It depends on Zn(2+) as a cofactor.

Its subcellular location is the cytoplasm. The catalysed reaction is tRNA(Cys) + L-cysteine + ATP = L-cysteinyl-tRNA(Cys) + AMP + diphosphate. The chain is Cysteine--tRNA ligase from Alkalilimnicola ehrlichii (strain ATCC BAA-1101 / DSM 17681 / MLHE-1).